Consider the following 225-residue polypeptide: UPF0758 protein Sbal223_0402 (225 aa).

The MPN domain occupies 102 to 224 (VLTNPDLTRD…IVSFAERGWI (123 aa)). 3 residues coordinate Zn(2+): His-173, His-175, and Asp-186. The JAMM motif motif lies at 173–186 (HNHPSGIAEPSQAD).

The protein belongs to the UPF0758 family.

The protein is UPF0758 protein Sbal223_0402 of Shewanella baltica (strain OS223).